Reading from the N-terminus, the 340-residue chain is Cytochrome c peroxidase, mitochondrial (340 aa).

Residues 1 to 17 (MRSFRAVRNFSTTAKRL) constitute a mitochondrion transit peptide. The active-site Proton acceptor is the histidine 101. Residues 175 to 198 (WKRGRVDEPESASPPDGSLPDASQ) are disordered. Histidine 224 provides a ligand contact to heme b. Tryptophan 240 functions as the Tryptophan radical intermediate in the catalytic mechanism.

Belongs to the peroxidase family. Cytochrome c peroxidase subfamily. In terms of assembly, forms a one-to-one complex with cytochrome c. Heme b is required as a cofactor.

The protein resides in the mitochondrion matrix. It localises to the mitochondrion intermembrane space. The catalysed reaction is 2 Fe(II)-[cytochrome c] + H2O2 + 2 H(+) = 2 Fe(III)-[cytochrome c] + 2 H2O. Functionally, destroys radicals which are normally produced within the cells and which are toxic to biological systems. In Yarrowia lipolytica (strain CLIB 122 / E 150) (Yeast), this protein is Cytochrome c peroxidase, mitochondrial (CCP1).